The primary structure comprises 373 residues: STE20-related kinase adapter protein alpha (373 aa).

Residues 11-321 (YELLTVIGKG…ASTLLNHSFF (311 aa)) enclose the Protein kinase domain. Residues 255–281 (STSRSAANSGLSESLAPSTPRTSNGDS) show a composition bias toward polar residues. Positions 255–288 (STSRSAANSGLSESLAPSTPRTSNGDSPSHPYHR) are disordered. The residue at position 361 (T361) is a Phosphothreonine; by LKB1.

The protein belongs to the protein kinase superfamily. STE Ser/Thr protein kinase family. STE20 subfamily. As to quaternary structure, component of a trimeric complex composed of STK11/LKB1, STRAD (STRADA or STRADB) and CAB39/MO25 (CAB39/MO25alpha or CAB39L/MO25beta): the complex tethers STK11/LKB1 in the cytoplasm and stimulates its catalytic activity.

It localises to the nucleus. It is found in the cytoplasm. Its function is as follows. Pseudokinase which, in complex with CAB39/MO25 (CAB39/MO25alpha or CAB39L/MO25beta), binds to and activates STK11/LKB1. Adopts a closed conformation typical of active protein kinases and binds STK11/LKB1 as a pseudosubstrate, promoting conformational change of STK11/LKB1 in an active conformation. The protein is STE20-related kinase adapter protein alpha (STRADA) of Bos taurus (Bovine).